A 141-amino-acid polypeptide reads, in one-letter code: MQLTSFTDYGLRALIYMASLPEGRMTSISEVTEVYGVSRNHMVKIINQLSRMGYVTAVRGKNGGIRLGKPAGQIRVGDVVRDLEPLSLVNCSSEFCHITPACRLKQALAEAAQSFLKELDNYTLADLVEKNQPLYKLLLVE.

One can recognise an HTH rrf2-type domain in the interval 2–129 (QLTSFTDYGL…DNYTLADLVE (128 aa)). Positions 28 to 51 (ISEVTEVYGVSRNHMVKIINQLSR) form a DNA-binding region, H-T-H motif. [2Fe-2S] cluster contacts are provided by cysteine 91, cysteine 96, and cysteine 102.

[2Fe-2S] cluster serves as cofactor.

Nitric oxide-sensitive repressor of genes involved in protecting the cell against nitrosative stress. May require iron for activity. This is HTH-type transcriptional repressor NsrR from Klebsiella pneumoniae subsp. pneumoniae (strain ATCC 700721 / MGH 78578).